Consider the following 207-residue polypeptide: Keratin-associated protein 27-1 (207 aa).

Positions 184 to 207 are disordered; the sequence is QLLESSPGVEPTCCVTGGSQLPSK.

Belongs to the PMG family. As to quaternary structure, interacts with hair keratins.

Its function is as follows. In the hair cortex, hair keratin intermediate filaments are embedded in an interfilamentous matrix, consisting of hair keratin-associated proteins (KRTAP), which are essential for the formation of a rigid and resistant hair shaft through their extensive disulfide bond cross-linking with abundant cysteine residues of hair keratins. The matrix proteins include the high-sulfur and high-glycine-tyrosine keratins. In Homo sapiens (Human), this protein is Keratin-associated protein 27-1 (KRTAP27-1).